We begin with the raw amino-acid sequence, 399 residues long: MSKGKLGEKISQFKIVEELKAKGLYAYFRPIQSKQDTEVKIDGRRVLMFGSNSYLGLTTDTRIIKAAQDALEKYGTGCAGSRFLNGTLDIHVELEEKLSAYVGKEAAILFSTGFQSNLGPLSCLMGRNDYILLDERDHASIIDGSRLSFSKVIKYGHNNMEDLRAKLSRLPEDSAKLICTDGIFSMEGDIVNLPELTSIANEFDAAVMVDDAHSLGVIGHKGAGTASHFGLNDDVDLIMGTFSKSLASLGGFVAGDADVIDFLKHNARSVMFSASMTPASVASTLKALEIIQNEPEHIEKLWKNTDYAKAQLLDHGFDLGATESPILPIFIRSNEKTFWVTKMLQDDGVFVNPVVSPAVPAEESLIRFSLMATHTYDQIDEAIEKMVKVFKQAEVETLI.

Pyridoxal 5'-phosphate contacts are provided by residues 113–114 (GF), H213, T241, and S243. K244 is subject to N6-(pyridoxal phosphate)lysine.

It belongs to the class-II pyridoxal-phosphate-dependent aminotransferase family. Homodimer. Pyridoxal 5'-phosphate serves as cofactor.

The protein localises to the cytoplasm. It is found in the cell inner membrane. It carries out the reaction L-serine + hexadecanoyl-CoA + H(+) = 3-oxosphinganine + CO2 + CoA. It functions in the pathway lipid metabolism; sphingolipid metabolism. Catalyzes the condensation of L-serine with palmitoyl-CoA (hexadecanoyl-CoA) to produce 3-oxosphinganine. Exhibits a broad substrate specificity concerning the chain length and the degree of unsaturation of acyl-CoA. This Sphingobacterium multivorum protein is Serine palmitoyltransferase.